The sequence spans 158 residues: Transcription elongation factor GreA (158 aa).

The stretch at 4 to 75 (EKTYPMTQEG…TQLENMIRNA (72 aa)) forms a coiled coil.

Belongs to the GreA/GreB family.

In terms of biological role, necessary for efficient RNA polymerase transcription elongation past template-encoded arresting sites. The arresting sites in DNA have the property of trapping a certain fraction of elongating RNA polymerases that pass through, resulting in locked ternary complexes. Cleavage of the nascent transcript by cleavage factors such as GreA or GreB allows the resumption of elongation from the new 3'terminus. GreA releases sequences of 2 to 3 nucleotides. In Bacillus anthracis (strain A0248), this protein is Transcription elongation factor GreA.